Reading from the N-terminus, the 116-residue chain is Iron-sulfur cluster insertion protein ErpA (116 aa).

C44, C108, and C110 together coordinate iron-sulfur cluster.

This sequence belongs to the HesB/IscA family. As to quaternary structure, homodimer. The cofactor is iron-sulfur cluster.

Functionally, required for insertion of 4Fe-4S clusters for at least IspG. In Shewanella amazonensis (strain ATCC BAA-1098 / SB2B), this protein is Iron-sulfur cluster insertion protein ErpA.